A 100-amino-acid polypeptide reads, in one-letter code: Aspartyl/glutamyl-tRNA(Asn/Gln) amidotransferase subunit C (100 aa).

The protein belongs to the GatC family. Heterotrimer of A, B and C subunits.

It carries out the reaction L-glutamyl-tRNA(Gln) + L-glutamine + ATP + H2O = L-glutaminyl-tRNA(Gln) + L-glutamate + ADP + phosphate + H(+). It catalyses the reaction L-aspartyl-tRNA(Asn) + L-glutamine + ATP + H2O = L-asparaginyl-tRNA(Asn) + L-glutamate + ADP + phosphate + 2 H(+). Allows the formation of correctly charged Asn-tRNA(Asn) or Gln-tRNA(Gln) through the transamidation of misacylated Asp-tRNA(Asn) or Glu-tRNA(Gln) in organisms which lack either or both of asparaginyl-tRNA or glutaminyl-tRNA synthetases. The reaction takes place in the presence of glutamine and ATP through an activated phospho-Asp-tRNA(Asn) or phospho-Glu-tRNA(Gln). The protein is Aspartyl/glutamyl-tRNA(Asn/Gln) amidotransferase subunit C of Streptococcus equi subsp. zooepidemicus (strain MGCS10565).